Consider the following 437-residue polypeptide: Chloride intracellular channel protein 5 (437 aa).

The span at 1-14 (MNDENYSTTIYNRV) shows a compositional bias: polar residues. The interval 1–197 (MNDENYSTTI…VSEGNESASA (197 aa)) is disordered. Basic and acidic residues predominate over residues 34-45 (DEVHEDVRREDN). 4 repeat units span residues 118–125 (QSDSEEPQ), 126–133 (ASDPEEPQ), 134–141 (ASDPEEPQ), and 142–149 (GPDPEEPQ). A 4 X 8 AA tandem repeats of [AGQ]-[SP]-D-[PS]-E-E-P-Q region spans residues 118–149 (QSDSEEPQASDPEEPQASDPEEPQGPDPEEPQ). Over residues 121 to 157 (SEEPQASDPEEPQASDPEEPQGPDPEEPQENGNEMEA) the composition is skewed to acidic residues. The segment covering 161–184 (SPSSFTIQNSRAFSTREISPTSYS) has biased composition (polar residues). The short motif at 217–220 (CPFS) is the G-site element. Residues 219–239 (FSQRLFMILWLKGVVFNVTTV) traverse the membrane as a helical segment. Residues 263–427 (NGDVKTDVNK…AADSEIELAY (165 aa)) enclose the GST C-terminal domain.

Belongs to the chloride channel CLIC family. Component of a multimeric complex consisting of several cytoskeletal proteins, including actin, ezrin, alpha-actinin, gelsolin, and IQGAP1. Interacts with AKAP9. Interacts with TPRN. TPRN, CLIC5 and PTPQR form concentric rings at the base of stereocilia and may form a complex. Interacts with EZR, MYO6 and RDX; the proteins may work together as a complex to stabilize linkages between the plasma membrane and subjacent actin cytoskeleton at the stereocilium base. Phosphorylated. Expressed in most tissues. Higher levels found in kidney, heart, skeletal muscle, T84 and PANC-1 cells.

The protein localises to the golgi apparatus. It localises to the cytoplasm. The protein resides in the cytoskeleton. Its subcellular location is the microtubule organizing center. It is found in the centrosome. The protein localises to the cell cortex. It localises to the membrane. The protein resides in the apical cell membrane. Its subcellular location is the mitochondrion. It is found in the cell projection. The protein localises to the stereocilium. It catalyses the reaction Na(+)(in) = Na(+)(out). The enzyme catalyses K(+)(in) = K(+)(out). The catalysed reaction is chloride(in) = chloride(out). With respect to regulation, inhibited by F-actin. In terms of biological role, in the soluble state, catalyzes glutaredoxin-like thiol disulfide exchange reactions with reduced glutathione as electron donor. Can insert into membranes and form non-selective ion channels almost equally permeable to Na(+), K(+) and Cl(-). Required for normal hearing. It is necessary for the formation of stereocilia in the inner ear and normal development of the organ of Corti. May play a role in the regulation of transepithelial ion absorption and secretion. Is required for the development and/or maintenance of the proper glomerular endothelial cell and podocyte architecture. Plays a role in formation of the lens suture in the eye, which is important for normal optical properties of the lens. This is Chloride intracellular channel protein 5 (CLIC5) from Bos taurus (Bovine).